Here is a 302-residue protein sequence, read N- to C-terminus: Ornithine carbamoyltransferase (302 aa).

Carbamoyl phosphate contacts are provided by residues Ser-52 to Thr-55, Gln-79, Arg-103, and His-130 to Gln-133. L-ornithine contacts are provided by residues Asn-161, Asp-221, and Ser-225–Met-226. Carbamoyl phosphate-binding positions include Cys-261–Leu-262 and Arg-289.

It belongs to the aspartate/ornithine carbamoyltransferase superfamily. OTCase family.

It is found in the cytoplasm. The enzyme catalyses carbamoyl phosphate + L-ornithine = L-citrulline + phosphate + H(+). It participates in amino-acid biosynthesis; L-arginine biosynthesis; L-arginine from L-ornithine and carbamoyl phosphate: step 1/3. Its function is as follows. Reversibly catalyzes the transfer of the carbamoyl group from carbamoyl phosphate (CP) to the N(epsilon) atom of ornithine (ORN) to produce L-citrulline. The chain is Ornithine carbamoyltransferase from Methanosarcina mazei (strain ATCC BAA-159 / DSM 3647 / Goe1 / Go1 / JCM 11833 / OCM 88) (Methanosarcina frisia).